The following is a 270-amino-acid chain: Regulatory protein RecX (270 aa).

The protein belongs to the RecX family.

It localises to the cytoplasm. Its function is as follows. Modulates RecA activity. The chain is Regulatory protein RecX from Bacillus cytotoxicus (strain DSM 22905 / CIP 110041 / 391-98 / NVH 391-98).